The chain runs to 322 residues: tRNA-modifying protein YgfZ (322 aa).

Residue tryptophan 182 coordinates folate.

This sequence belongs to the tRNA-modifying YgfZ family.

The protein localises to the cytoplasm. Functionally, folate-binding protein involved in regulating the level of ATP-DnaA and in the modification of some tRNAs. It is probably a key factor in regulatory networks that act via tRNA modification, such as initiation of chromosomal replication. This Vibrio campbellii (strain ATCC BAA-1116) protein is tRNA-modifying protein YgfZ.